We begin with the raw amino-acid sequence, 351 residues long: Dihydroorotate dehydrogenase (quinone) (351 aa).

FMN-binding positions include Ala-67 to Lys-71 and Thr-91. Lys-71 contributes to the substrate binding site. A substrate-binding site is contributed by Asn-116–Phe-120. Positions 145 and 178 each coordinate FMN. Asn-178 provides a ligand contact to substrate. Ser-181 serves as the catalytic Nucleophile. Asn-183 contributes to the substrate binding site. FMN is bound by residues Lys-214 and Thr-242. Asn-243–Thr-244 provides a ligand contact to substrate. Residues Gly-262, Gly-291, and Tyr-312 to Ser-313 contribute to the FMN site.

It belongs to the dihydroorotate dehydrogenase family. Type 2 subfamily. As to quaternary structure, monomer. FMN serves as cofactor.

It localises to the cell membrane. It carries out the reaction (S)-dihydroorotate + a quinone = orotate + a quinol. The protein operates within pyrimidine metabolism; UMP biosynthesis via de novo pathway; orotate from (S)-dihydroorotate (quinone route): step 1/1. Catalyzes the conversion of dihydroorotate to orotate with quinone as electron acceptor. This is Dihydroorotate dehydrogenase (quinone) from Helicobacter pylori (strain Shi470).